The following is a 101-amino-acid chain: Small ribosomal subunit protein uS14 (101 aa).

It belongs to the universal ribosomal protein uS14 family. In terms of assembly, part of the 30S ribosomal subunit. Contacts proteins S3 and S10.

In terms of biological role, binds 16S rRNA, required for the assembly of 30S particles and may also be responsible for determining the conformation of the 16S rRNA at the A site. This chain is Small ribosomal subunit protein uS14, found in Vibrio campbellii (strain ATCC BAA-1116).